Reading from the N-terminus, the 35-residue chain is Photosystem II reaction center protein M (35 aa).

The chain crosses the membrane as a helical span at residues 5–25; it reads ILAFIATALFILVPTAFLLII.

This sequence belongs to the PsbM family. As to quaternary structure, PSII is composed of 1 copy each of membrane proteins PsbA, PsbB, PsbC, PsbD, PsbE, PsbF, PsbH, PsbI, PsbJ, PsbK, PsbL, PsbM, PsbT, PsbX, PsbY, PsbZ, Psb30/Ycf12, at least 3 peripheral proteins of the oxygen-evolving complex and a large number of cofactors. It forms dimeric complexes.

The protein resides in the plastid. It is found in the chloroplast thylakoid membrane. Its function is as follows. One of the components of the core complex of photosystem II (PSII). PSII is a light-driven water:plastoquinone oxidoreductase that uses light energy to abstract electrons from H(2)O, generating O(2) and a proton gradient subsequently used for ATP formation. It consists of a core antenna complex that captures photons, and an electron transfer chain that converts photonic excitation into a charge separation. This subunit is found at the monomer-monomer interface. This chain is Photosystem II reaction center protein M, found in Panax quinquefolius (American ginseng).